A 310-amino-acid chain; its full sequence is 4-hydroxyproline 2-epimerase (310 aa).

The active-site Proton acceptor is cysteine 88. Substrate-binding positions include 89–90 (GH), histidine 208, and aspartate 232. Cysteine 236 (proton donor) is an active-site residue. Substrate is bound at residue 237-238 (GT).

Belongs to the proline racemase family.

The enzyme catalyses trans-4-hydroxy-L-proline = cis-4-hydroxy-D-proline. Its function is as follows. Catalyzes the epimerization of trans-4-hydroxy-L-proline (t4LHyp) to cis-4-hydroxy-D-proline (c4DHyp). Is likely involved in a degradation pathway that converts t4LHyp to alpha-ketoglutarate. Displays no proline racemase activity. In Pseudomonas fluorescens (strain ATCC BAA-477 / NRRL B-23932 / Pf-5), this protein is 4-hydroxyproline 2-epimerase.